Reading from the N-terminus, the 80-residue chain is Toxin Acra I-3 (80 aa).

Positions 1 to 22 (MMKLVLLSVIVILFSLIGSIHG) are cleaved as a signal peptide. The region spanning 25–80 (VPGNYPLDSSGNKYPCTVLGDNQSCIDVCKKHGVKYGYCYGFKCWCEYLKDKNVSL) is the LCN-type CS-alpha/beta domain. Cystine bridges form between Cys-40/Cys-63, Cys-49/Cys-68, and Cys-53/Cys-70.

It belongs to the long (3 C-C) scorpion toxin superfamily. Sodium/Potassium channel inhibitor family. Expressed by the venom gland.

The protein resides in the secreted. Its function is as follows. Probable neurotoxin that inhibits ion channels. Is toxic to mice. The sequence is that of Toxin Acra I-3 from Androctonus crassicauda (Arabian fat-tailed scorpion).